The following is a 135-amino-acid chain: Salivary protein 15 (135 aa).

Positions 1–21 are cleaved as a signal peptide; it reads MESFVAMKVVCILFLVGVVAA. N-linked (GlcNAc...) asparagine glycosylation occurs at asparagine 22. The segment at 48 to 67 is required for Borrelia OspC-binding; it reads PNYISNHQKLALKLLKICKD. N-linked (GlcNAc...) asparagine glycans are attached at residues asparagine 92 and asparagine 104. The CD4-binding stretch occupies residues 116–135; it reads GPNGQTCAEKNKCVGHIPGC.

It belongs to the salp15 family. As to quaternary structure, monomer. Interacts with host CD4. Interacts with host DC-SIGN (CD209). (Microbial infection) Interacts with Borrelia outer surface protein C (OspC). Post-translationally, glycosylated. In terms of tissue distribution, expressed in salivary glands. Detected in host skin, at the site of natural inoculation.

The protein localises to the secreted. In terms of biological role, salivary tick protein that downregulates host immune system by binding to both dendritic cells, and CD4(+) T cells. Specifically binds to the CD4 coreceptor on T cells. This interaction prevents the activation of the Src kinase, Lck, and its downstream substrate Zap-70, and results in deficient activation of PLCgamma1, the repression of calcium fluxes triggered by T-cell antigen receptor (TCR) ligation, and a subsequent reduction in interleukin-2 production. This salivary protein also binds to DC-SIGN (CD209) on dendritic cells (DC) and activates the Raf-1 kinase/MEK signaling pathway that results in down-regulating expression of pro-inflammatory cytokines. Furthermore, it inhibits T cell proliferation induced by DCs. It also inhibits in vitro keratinocyte inflammation induced by Borrelia burgdorferi or by the major outer surface protein (OspC) of Borrelia. In addition, it downregulates chemokines and monocyte chemoattractant protein 1, as well as several antimicrobial peptides such as defensins, cathelicidin, psoriasin, and RNase 7. Apart from its immunomodulatory activities, it is also associated with protection of Borrelia spirochetes from antibody-mediated killing through its binding to OspC. In vivo, tests on different immune disease animal models show promising therapeutic results, e.g., in inhibiting HIV infection, experimental autoimmune encephalomyelitis, transplantation rejection, and asthma. Its function is as follows. (Microbial infection) Protects Borrelia garinii (strains A87S and VSBP) from host complement-mediated killing. (Microbial infection) Partially protects Borrelia burgdorferi (strains VS215 and B31) from host complement-mediated killing. The chain is Salivary protein 15 from Ixodes scapularis (Black-legged tick).